A 121-amino-acid chain; its full sequence is LOB domain-containing protein 23 (121 aa).

The 102-residue stretch at 4–105 (KRCAACKYLR…NELAKTQAEI (102 aa)) folds into the LOB domain.

It belongs to the LOB domain-containing protein family.

This is LOB domain-containing protein 23 (LBD23) from Arabidopsis thaliana (Mouse-ear cress).